We begin with the raw amino-acid sequence, 1522 residues long: Paired amphipathic helix protein pst1 (1522 aa).

Positions 139–174 are disordered; it reads TILSSTDSNIPRPGTVKSSASPFVPNQNPSAPPPPP. Positions 178 to 248 constitute a PAH 1 domain; that stretch reads RQLNVTDALS…QGFNTFLPPG (71 aa). The segment at 307–339 is disordered; it reads QSSASHPVLQPPAPSTLQFNPSPSPAAPSYPPV. Residues 328–337 show a composition bias toward pro residues; it reads SPSPAAPSYP. Positions 345 to 415 constitute a PAH 2 domain; the sequence is QAADLDQAIN…EEFKRFLPDV (71 aa). Disordered stretches follow at residues 422 to 504, 928 to 968, and 1343 to 1522; these read ETQD…AFNV, AREN…DESS, and SGKA…KDDL. The span at 426-441 shows a compositional bias: polar residues; the sequence is KSTVVPQESATATPKR. Residue Ser-442 is modified to Phosphoserine. Residues 442-468 show a composition bias toward low complexity; that stretch reads SPSATPTSALPPIGKFAPPTTAKAQPA. At Thr-446 the chain carries Phosphothreonine. The PAH 3 domain maps to 504-576; that stretch reads VPIAQNKNPS…NWLKDLVKYN (73 aa). Residues 928–960 show a composition bias toward basic and acidic residues; it reads ARENRSSVKEDYVSESTERTPDASEIDEHISEH. Positions 1385-1398 are enriched in polar residues; sequence GKSSVTRGNKTNLK. The span at 1403-1432 shows a compositional bias: basic and acidic residues; that stretch reads RNNDDSSNKINLSEKEKEKESIEDEEKNRE. Phosphoserine is present on Ser-1443. Basic and acidic residues predominate over residues 1461 to 1474; that stretch reads TSSHRPERSSEKKS. Polar residues predominate over residues 1478 to 1487; the sequence is VFTSVKQTAE. A compositionally biased stretch (acidic residues) spans 1488 to 1522; the sequence is NDADNEDDKTDMDDQTEETLDADNTMEEEPSKDDL.

The protein localises to the nucleus. In terms of biological role, has a role in modulating the nuclear import of TF1 virus-like particles. Essential for viability. The chain is Paired amphipathic helix protein pst1 (pst1) from Schizosaccharomyces pombe (strain 972 / ATCC 24843) (Fission yeast).